The chain runs to 147 residues: uncharacterized protein (147 aa).

Belongs to the MG185/MG260 family.

This is an uncharacterized protein from Mycoplasma pneumoniae (strain ATCC 29342 / M129 / Subtype 1) (Mycoplasmoides pneumoniae).